Consider the following 65-residue polypeptide: Large ribosomal subunit protein bL28 (65 aa).

This sequence belongs to the bacterial ribosomal protein bL28 family.

This is Large ribosomal subunit protein bL28 from Lachnoclostridium phytofermentans (strain ATCC 700394 / DSM 18823 / ISDg) (Clostridium phytofermentans).